The sequence spans 324 residues: Acetyl-coenzyme A carboxylase carboxyl transferase subunit alpha (324 aa).

The CoA carboxyltransferase C-terminal domain occupies R44–I298.

It belongs to the AccA family. Acetyl-CoA carboxylase is a heterohexamer composed of biotin carboxyl carrier protein (accB), biotin carboxylase (accC) and two subunits each of ACCase subunit alpha (accA) and ACCase subunit beta (accD).

It localises to the plastid. It is found in the chloroplast. It catalyses the reaction N(6)-carboxybiotinyl-L-lysyl-[protein] + acetyl-CoA = N(6)-biotinyl-L-lysyl-[protein] + malonyl-CoA. It functions in the pathway lipid metabolism; malonyl-CoA biosynthesis; malonyl-CoA from acetyl-CoA: step 1/1. In terms of biological role, component of the acetyl coenzyme A carboxylase (ACC) complex. First, biotin carboxylase catalyzes the carboxylation of biotin on its carrier protein (BCCP) and then the CO(2) group is transferred by the carboxyltransferase to acetyl-CoA to form malonyl-CoA. This Porphyra purpurea (Red seaweed) protein is Acetyl-coenzyme A carboxylase carboxyl transferase subunit alpha.